The sequence spans 79 residues: ATP synthase subunit c (79 aa).

The next 2 membrane-spanning stretches (helical) occupy residues 11 to 31 and 59 to 79; these read IAVA…IGIL and LVDA…FAVI.

The protein belongs to the ATPase C chain family. As to quaternary structure, F-type ATPases have 2 components, F(1) - the catalytic core - and F(0) - the membrane proton channel. F(1) has five subunits: alpha(3), beta(3), gamma(1), delta(1), epsilon(1). F(0) has three main subunits: a(1), b(2) and c(10-14). The alpha and beta chains form an alternating ring which encloses part of the gamma chain. F(1) is attached to F(0) by a central stalk formed by the gamma and epsilon chains, while a peripheral stalk is formed by the delta and b chains.

Its subcellular location is the cell membrane. Its function is as follows. F(1)F(0) ATP synthase produces ATP from ADP in the presence of a proton or sodium gradient. F-type ATPases consist of two structural domains, F(1) containing the extramembraneous catalytic core and F(0) containing the membrane proton channel, linked together by a central stalk and a peripheral stalk. During catalysis, ATP synthesis in the catalytic domain of F(1) is coupled via a rotary mechanism of the central stalk subunits to proton translocation. Key component of the F(0) channel; it plays a direct role in translocation across the membrane. A homomeric c-ring of between 10-14 subunits forms the central stalk rotor element with the F(1) delta and epsilon subunits. The protein is ATP synthase subunit c of Buchnera aphidicola subsp. Baizongia pistaciae (strain Bp).